The sequence spans 307 residues: Heme A synthase (307 aa).

Residues 1–8 (MQHNRYLK) are Cytoplasmic-facing. Residues 9–29 (WFAVAATVGMLLILLGGALVT) traverse the membrane as a helical segment. The Extracellular segment spans residues 30 to 56 (KTDSGLGCGRNWPDCNGSLIPKEITPE). Cys-37 and Cys-44 are oxidised to a cystine. Residues 57–77 (VLIEFSHRLVTGVVSISILVL) traverse the membrane as a helical segment. Residue Glu-60 is part of the active site. His-63 provides a ligand contact to heme o. The Cytoplasmic segment spans residues 78–92 (TVWTWRKLGHIREVK). A helical membrane pass occupies residues 93 to 113 (LLGFLAMFFLIAQALIGAAQV). At 114 to 123 (LWGQGDFILA) the chain is on the extracellular side. Residues 124 to 144 (LHFGISLISFAAVLLLSMIVF) form a helical membrane-spanning segment. His-125 is a heme o binding site. The Cytoplasmic portion of the chain corresponds to 145–161 (EVDRKFDADNVFIGKKL). The chain crosses the membrane as a helical span at residues 162–182 (RWHTIAVTIYSYLVVYTGALV). Topologically, residues 183–218 (RHTDSSLICPDWPFCYNETPLASPNNMYEWVQMGHR) are extracellular. A disulfide bridge connects residues Cys-191 and Cys-197. His-217 serves as a coordination point for heme b. Residues 219-239 (LAVLIIFIWIAYITWHAVKEY) traverse the membrane as a helical segment. Topologically, residues 240–247 (KNQRVVYY) are cytoplasmic. Residues 248-268 (GWIIAFTIVFLQVIAGMLVVL) form a helical membrane-spanning segment. The Extracellular segment spans residues 269–276 (TKLNLTVA). A helical transmembrane segment spans residues 277–297 (LMHSLLISLLFGLLCYMIMLV). His-279 is a binding site for heme b. Residues 298–307 (ARSNYNEKMK) lie on the Cytoplasmic side of the membrane.

Belongs to the COX15/CtaA family. Type 1 subfamily. As to quaternary structure, interacts with CtaB. It depends on heme b as a cofactor.

It is found in the cell membrane. It catalyses the reaction Fe(II)-heme o + 2 A + H2O = Fe(II)-heme a + 2 AH2. It participates in porphyrin-containing compound metabolism; heme A biosynthesis; heme A from heme O: step 1/1. Its function is as follows. Catalyzes the conversion of heme O to heme A by two successive hydroxylations of the methyl group at C8. The first hydroxylation forms heme I, the second hydroxylation results in an unstable dihydroxymethyl group, which spontaneously dehydrates, resulting in the formyl group of heme A. In Lysinibacillus sphaericus (strain C3-41), this protein is Heme A synthase.